The sequence spans 584 residues: ATP-dependent RNA helicase MRH4, mitochondrial (584 aa).

A mitochondrion-targeting transit peptide spans 1–49; the sequence is MQPVFSRFPYASKSGFISLASRGYAVSRNSGSSIKSNLRSKPRADTRWN. Positions 28 to 39 are enriched in polar residues; sequence RNSGSSIKSNLR. The tract at residues 28–92 is disordered; it reads RNSGSSIKSN…QTQQQFQYGE (65 aa). Over residues 63–79 the composition is skewed to basic and acidic residues; it reads GKGDHRSHSRSDSRAKP. Positions 162–169 match the Q motif motif; that stretch reads HLKPSPIQ. Residues 179-366 form the Helicase ATP-binding domain; the sequence is TLMDPQLQVR…TRLFPTVGVI (188 aa). 192 to 199 lines the ATP pocket; it reads AETGSGKT. The DEAD box signature appears at 314 to 317; it reads DEAD. In terms of domain architecture, Helicase C-terminal spans 397 to 584; it reads ALAQILYSIN…SIVSKNVSIS (188 aa).

The protein belongs to the DEAD box helicase family. MRH4 subfamily.

It is found in the mitochondrion. It catalyses the reaction ATP + H2O = ADP + phosphate + H(+). Its function is as follows. ATP-binding RNA helicase involved in mitochondrial RNA metabolism. Required for maintenance of mitochondrial DNA. The protein is ATP-dependent RNA helicase MRH4, mitochondrial (MRH4) of Kluyveromyces lactis (strain ATCC 8585 / CBS 2359 / DSM 70799 / NBRC 1267 / NRRL Y-1140 / WM37) (Yeast).